The chain runs to 221 residues: Serine/arginine-rich splicing factor 2 (221 aa).

An N-acetylserine modification is found at serine 2. Phosphoserine is present on serine 2. The 79-residue stretch at 14-92 (TSLKVDNLTY…RELRVQMARY (79 aa)) folds into the RRM domain. A phosphothreonine mark is found at threonine 22 and threonine 25. A Phosphoserine modification is found at serine 26. Lysine 52 bears the N6-acetyllysine mark. The disordered stretch occupies residues 92–221 (YGRPPDSHHS…SPEEEGAVSS (130 aa)). 2 stretches are compositionally biased toward basic residues: residues 117–171 (RRSR…RSKS) and 179–189 (SRSRSRSRSRS). Residues serine 189, serine 191, serine 204, serine 206, serine 208, serine 212, and serine 220 each carry the phosphoserine modification.

The protein belongs to the splicing factor SR family. In terms of assembly, in vitro, self-associates and binds SRSF1/SFRS1 (ASF/SF2), SNRNP70 and U2AF1 but not U2AF2. Binds SREK1/SFRS12. Interacts with CCNL1 and CCNL2. Interacts with SCAF11. Interacts with ZRSR2/U2AF1-RS2. Interacts with CCDC55 (via C-terminus). Interacts with BRDT. In terms of processing, extensively phosphorylated on serine residues in the RS domain. Phosphorylated by SRPK2 and this causes its redistribution from the nuclear speckle to nucleoplasm and controls cell fate decision in response to cisplatin treatment. KAT5/TIP60 inhibits its phosphorylation by preventing SRPK2 nuclear translocation. Post-translationally, acetylation on Lys-52 by KAT5/TIP60 promotes its proteasomal degradation. This effect is counterbalanced by HDAC6, which positively controls SRSF2 protein level by deacetylating it and preventing its proteasomal degradation.

The protein resides in the nucleus. It is found in the nucleoplasm. Its subcellular location is the nucleus speckle. Necessary for the splicing of pre-mRNA. It is required for formation of the earliest ATP-dependent splicing complex and interacts with spliceosomal components bound to both the 5'- and 3'-splice sites during spliceosome assembly. It also is required for ATP-dependent interactions of both U1 and U2 snRNPs with pre-mRNA. Interacts with other spliceosomal components, via the RS domains, to form a bridge between the 5'- and 3'-splice site binding components, U1 snRNP and U2AF. Binds to purine-rich RNA sequences, either 5'-AGSAGAGTA-3' (S=C or G) or 5'-GTTCGAGTA-3'. Can bind to beta-globin mRNA and commit it to the splicing pathway. The phosphorylated form (by SRPK2) is required for cellular apoptosis in response to cisplatin treatment. The sequence is that of Serine/arginine-rich splicing factor 2 (SRSF2) from Sus scrofa (Pig).